A 216-amino-acid polypeptide reads, in one-letter code: Protein ORM2 (216 aa).

The interval 1–50 (MIDRTKNESPAFEESPLTPNVSNLKPFPSQSNKISTPVTDHRRRRSSSVI) is disordered. Over 1–78 (MIDRTKNESP…NMNATWVDQR (78 aa)) the chain is Cytoplasmic. 2 positions are modified to phosphoserine: Ser-9 and Ser-15. The span at 17 to 38 (LTPNVSNLKPFPSQSNKISTPV) shows a compositional bias: polar residues. Thr-18 carries the phosphothreonine modification. Phosphoserine is present on residues Ser-22, Ser-29, and Ser-51. A helical transmembrane segment spans residues 79-99 (GAWLIHIVVIVLLRLFYSLFG). At 100-103 (STPK) the chain is on the extracellular side. Residues 104-124 (WTWTLTNMTYIIGFYIMFHLV) traverse the membrane as a helical segment. Over 125–148 (KGTPFDFNGGAYDNLTMWEQINDE) the chain is Cytoplasmic. A helical membrane pass occupies residues 149 to 169 (TLYTPTRKFLLIVPIVLFLIS). The Extracellular segment spans residues 170 to 177 (NQYYRNDM). Residues 178-198 (TLFLSNLAVTVLIGVVPKLGI) traverse the membrane as a helical segment. The Cytoplasmic portion of the chain corresponds to 199–216 (THRLRISIPGITGRAQIS).

The protein belongs to the ORM family. As to quaternary structure, component of the SPOTS complex, at least composed of LCB1/2 (LCB1 and/or LCB2), ORM1/2 (ORM1 and/or ORM2), SAC1 and TSC3. In terms of processing, phosphorylated in case of disruption of sphingolipid synthesis. Phosphorylation regulates the inhibitory activity of serine palmitoyltransferases (LCB1 and LCB2).

The protein localises to the endoplasmic reticulum membrane. Functionally, component of the SPOTS complex that acts as a negative regulator of sphingolipid synthesis. Acts by inhibiting serine palmitoyltransferases (LCB1 and LCB2) activity. Along with ORM1, plays a role in the phosphorylation of LAC1 and YPK1, the distribution of actin patches between mother and daughter cells, and in endocytosis. This is Protein ORM2 (ORM2) from Saccharomyces cerevisiae (strain ATCC 204508 / S288c) (Baker's yeast).